The primary structure comprises 1009 residues: Epididymis-specific alpha-mannosidase (1009 aa).

Positions 1-23 (MGQLCWLPLLAPLLLLRPPGVQS) are cleaved as a signal peptide. Zn(2+) contacts are provided by His36, Asp38, and Asp151. Asp151 functions as the Nucleophile in the catalytic mechanism. Asn226, Asn249, Asn294, and Asn336 each carry an N-linked (GlcNAc...) asparagine glycan. His420 is a binding site for Zn(2+). N-linked (GlcNAc...) asparagine glycosylation is found at Asn516, Asn608, Asn670, Asn675, Asn748, Asn808, Asn812, and Asn890. The disordered stretch occupies residues 972-991 (GPGRHRGDTTSPSRPPGGPI).

The protein belongs to the glycosyl hydrolase 38 family. Requires Zn(2+) as cofactor.

The protein localises to the secreted. It catalyses the reaction Hydrolysis of terminal, non-reducing alpha-D-mannose residues in alpha-D-mannosides.. The sequence is that of Epididymis-specific alpha-mannosidase (MAN2B2) from Homo sapiens (Human).